Consider the following 203-residue polypeptide: NAD(P)H dehydrogenase (quinone) (203 aa).

The Flavodoxin-like domain maps to 3 to 194; the sequence is VLIAYYSMYG…AAARYQGKHV (192 aa). Residues 9-14 and 82-84 contribute to the FMN site; these read SMYGHI and TRF. Position 11 (Y11) interacts with NAD(+). W102 is a binding site for substrate. FMN-binding positions include 117 to 123 and H138; that span reads SSATQHG.

This sequence belongs to the WrbA family. The cofactor is FMN.

It catalyses the reaction a quinone + NADH + H(+) = a quinol + NAD(+). It carries out the reaction a quinone + NADPH + H(+) = a quinol + NADP(+). In Geotalea uraniireducens (strain Rf4) (Geobacter uraniireducens), this protein is NAD(P)H dehydrogenase (quinone).